Consider the following 1659-residue polypeptide: eIF-2-alpha kinase GCN2 (1659 aa).

Residues asparagine 17–phenylalanine 128 enclose the RWD domain. A disordered region spans residues lysine 149–glutamate 170. 2 Protein kinase domains span residues leucine 256–leucine 527 and phenylalanine 599–leucine 981. Residues leucine 605 to valine 613 and lysine 628 each bind ATP. Disordered regions lie at residues asparagine 671–glutamate 691 and phenylalanine 727–arginine 768. Position 761 is a phosphoserine (serine 761). Residue aspartate 835 is the Proton acceptor of the active site. Phosphothreonine; by autocatalysis is present on residues threonine 882 and threonine 887. Residues asparagine 999 to serine 1519 are histidyl-tRNA synthetase-like.

This sequence belongs to the protein kinase superfamily. Ser/Thr protein kinase family. GCN2 subfamily. As to quaternary structure, homodimer; homodimerization is important for kinase activation by uncharged tRNAs. Interacts (via N-terminal RWD domain) with GCN1 (via N- and C-terminus); this interaction stimulates GCN2 kinase activity in a GCN20-dependent manner in response to amino acid starvation. Interacts (via N-terminus) with the GCN1-GCN20 complex on translating ribosomes in amino acid-starved cells; GCN1 may bind near the ribosomal A-site and promotes the transfer of uncharged tRNAs from the A-site to the tRNA-binding domain in GCN2 for its subsequent kinase activation, and hence allowing GCN4 translational activation and derepression of amino acid biosynthetic genes. Interacts (via C-terminus) with TIF11; this interaction is direct, occurs in amino acid-repleted cells, may be stabilized in a ribosome-dependent manner, reduces GCN2-mediated eIF-2-alpha phosphorylation but not GCN2 autophosphorylation and is lost in amino acid-starved cells and by uncharged tRNAs. Associates (via C-terminus) with ribosomes. Requires Mg(2+) as cofactor. Post-translationally, autophosphorylated, autophosphorylation on Thr-882 and Thr-887 increases kinase activity.

It localises to the cytoplasm. The enzyme catalyses L-seryl-[protein] + ATP = O-phospho-L-seryl-[protein] + ADP + H(+). It carries out the reaction L-threonyl-[protein] + ATP = O-phospho-L-threonyl-[protein] + ADP + H(+). With respect to regulation, the integrated stress response (ISR) is activated in response to conditions that promote ribosome collisions: GCN1, which acts as a ribosome collision sensor, activates GCN2. The RQC pathway and the integrated stress response (ISR) antagonize each other: HEL2 prevents the activation of GCN2, while GCN2 suppresses RQC activation. Ribosome stalling-induced integrated stress response prefers ribosomes with empty A sites. The kinase activity is stimulated upon binding to uncharged tRNAs. In terms of biological role, metabolic-stress sensing protein kinase that phosphorylates the alpha subunit of eukaryotic translation initiation factor 2 (eIF-2-alpha/SUI2) on 'Ser-52' in response to low amino acid, carbon, or purine availability. Required for adapatation to nutrient starvation by acting as a key component of the integrated stress response (ISR), by which cells alter their translational and transcriptional output in response to starvation. Converts phosphorylated eIF-2-alpha/SUI2 either to a competitive inhibitor of translation initiation factor eIF-2B, leading to a global protein synthesis repression, and thus to a reduced overall utilization of amino acids, or to a translational initiation activation of specific mRNAs, such as the transcriptional activator GCN4, and hence allowing GCN4-mediated reprogramming of transcription to alleviate nutrient depletion. Binds uncharged tRNAs. Binds to aminoacylated tRNA(Phe) less tightly than to deacylated tRNA(Phe). Binds to double-stranded RNA. In Saccharomyces cerevisiae (strain ATCC 204508 / S288c) (Baker's yeast), this protein is eIF-2-alpha kinase GCN2.